The following is a 603-amino-acid chain: Penicillin-binding protein activator LpoA (603 aa).

An N-terminal signal peptide occupies residues 1–24; that stretch reads MINHKRLSVPRILTPVALAITLAA. Cys25 is lipidated: N-palmitoyl cysteine. A lipid anchor (S-diacylglycerol cysteine) is attached at Cys25.

Belongs to the LpoA family. As to quaternary structure, interacts with PBP1a.

The protein resides in the cell outer membrane. Its function is as follows. Regulator of peptidoglycan synthesis that is essential for the function of penicillin-binding protein 1A (PBP1a). The chain is Penicillin-binding protein activator LpoA from Vibrio antiquarius (strain Ex25).